The following is a 615-amino-acid chain: Lipoprotein LpqB (615 aa).

Residues 1–29 (MGADRGRGGRRRPARVVAYAVGGVVLLAG) form the signal peptide. The N-palmitoyl cysteine moiety is linked to residue cysteine 30. Residue cysteine 30 is the site of S-diacylglycerol cysteine attachment. The disordered stretch occupies residues 100–123 (PDESATVLAGGPGTESDHSGNRED). The segment covering 114–123 (ESDHSGNRED) has biased composition (basic and acidic residues).

Belongs to the LpqB lipoprotein family.

Its subcellular location is the cell membrane. This is Lipoprotein LpqB from Streptomyces coelicolor (strain ATCC BAA-471 / A3(2) / M145).